We begin with the raw amino-acid sequence, 1016 residues long: Probable outer membrane protein PmpH (1016 aa).

Residues 1–24 (MPFSLRSTSFCFLACLCSYSYGFA) form the signal peptide. In terms of domain architecture, Autotransporter spans 697–1016 (GELVPNSLWV…FVSMGLNRIF (320 aa)).

This sequence belongs to the PMP outer membrane protein family.

Its subcellular location is the secreted. It is found in the cell wall. It localises to the cell outer membrane. This Chlamydia trachomatis serovar D (strain ATCC VR-885 / DSM 19411 / UW-3/Cx) protein is Probable outer membrane protein PmpH (pmpH).